The chain runs to 209 residues: Putative NAD(P)H nitroreductase YdgI (209 aa).

FMN-binding positions include 14–16 (RRS), 72–74 (QTQ), 161–162 (GG), and arginine 199.

This sequence belongs to the nitroreductase family. The cofactor is FMN.

The protein is Putative NAD(P)H nitroreductase YdgI (ydgI) of Bacillus subtilis (strain 168).